We begin with the raw amino-acid sequence, 385 residues long: Linearmycin resistance permease protein LnrN (385 aa).

6 helical membrane-spanning segments follow: residues 22-42 (YLIMFAAPLLLTFVFGSMLSG), 198-218 (AAGFSILFVMLTMMGAAGTIL), 239-259 (IGAGYVLSFFVIGWIQFGILL), 274-294 (AAVIVLVSLFLLTVVGIGLMI), 305-325 (LAFGNLFVIATCMVSGMYWPI), and 360-380 (DILGICGILLAFAAITFAAGL). The 220-residue stretch at 163–382 (KTVFAKKHED…AITFAAGLKA (220 aa)) folds into the ABC transmembrane type-2 domain.

This sequence belongs to the ABC-2 integral membrane protein family. In terms of assembly, the complex is composed of two ATP-binding proteins (LnrL) and two transmembrane proteins (LnrM and LnrN).

The protein resides in the cell membrane. In terms of biological role, required for resistance to linearmycins, a family of antibiotic-specialized metabolites produced by some streptomycetes. Part of the ABC transporter complex LnrLMN that probably facilitates linearmycin removal from the membrane. Responsible for the translocation of the substrate across the membrane. Also mediates KinC-dependent biofilm morphology. The protein is Linearmycin resistance permease protein LnrN of Bacillus subtilis (strain 168).